A 146-amino-acid polypeptide reads, in one-letter code: Pre-mRNA-splicing factor cwf14 (146 aa).

This sequence belongs to the BUD31 (G10) family. Belongs to the 40S cdc5-associated complex (or cwf complex), a spliceosome sub-complex reminiscent of a late-stage spliceosome composed of the U2, U5 and U6 snRNAs and at least brr2, cdc5, cwf2/prp3, cwf3/syf1, cwf4/syf3, cwf5/ecm2, spp42/cwf6, cwf7/spf27, cwf8, cwf9, cwf10, cwf11, cwf12, prp45/cwf13, cwf14, cwf15, cwf16, cwf17, cwf18, cwf19, cwf20, cwf21, cwf22, cwf23, cwf24, cwf25, cwf26, cyp7/cwf27, cwf28, cwf29/ist3, lea1, msl1, prp5/cwf1, prp10, prp12/sap130, prp17, prp22, sap61, sap62, sap114, sap145, slu7, smb1, smd1, smd3, smf1, smg1 and syf2.

The protein resides in the nucleus. Its function is as follows. Involved in mRNA splicing where it associates with cdc5 and the other cwf proteins as part of the spliceosome. This is Pre-mRNA-splicing factor cwf14 (cwf14) from Schizosaccharomyces pombe (strain 972 / ATCC 24843) (Fission yeast).